A 267-amino-acid chain; its full sequence is Thymidylate synthase (267 aa).

Position 25 (Arg-25) interacts with dUMP. A (6R)-5,10-methylene-5,6,7,8-tetrahydrofolate-binding site is contributed by His-55. Position 130–131 (130–131) interacts with dUMP; it reads RR. The active-site Nucleophile is Cys-150. DUMP is bound by residues 170–173, Asn-181, and 211–213; these read RSAD and HIY. Residue Asp-173 participates in (6R)-5,10-methylene-5,6,7,8-tetrahydrofolate binding. Position 266 (Ala-266) interacts with (6R)-5,10-methylene-5,6,7,8-tetrahydrofolate.

This sequence belongs to the thymidylate synthase family. Bacterial-type ThyA subfamily. In terms of assembly, homodimer.

It localises to the cytoplasm. The catalysed reaction is dUMP + (6R)-5,10-methylene-5,6,7,8-tetrahydrofolate = 7,8-dihydrofolate + dTMP. It participates in pyrimidine metabolism; dTTP biosynthesis. Catalyzes the reductive methylation of 2'-deoxyuridine-5'-monophosphate (dUMP) to 2'-deoxythymidine-5'-monophosphate (dTMP) while utilizing 5,10-methylenetetrahydrofolate (mTHF) as the methyl donor and reductant in the reaction, yielding dihydrofolate (DHF) as a by-product. This enzymatic reaction provides an intracellular de novo source of dTMP, an essential precursor for DNA biosynthesis. The sequence is that of Thymidylate synthase from Corynebacterium efficiens (strain DSM 44549 / YS-314 / AJ 12310 / JCM 11189 / NBRC 100395).